The sequence spans 284 residues: Nucleotide-binding protein NMA0948 (284 aa).

8 to 15 (GLSGSGKS) contacts ATP. Residue 58-61 (DVRS) participates in GTP binding.

This sequence belongs to the RapZ-like family.

Displays ATPase and GTPase activities. This is Nucleotide-binding protein NMA0948 from Neisseria meningitidis serogroup A / serotype 4A (strain DSM 15465 / Z2491).